A 148-amino-acid chain; its full sequence is MMLRAWRLMVLLAAYCYYVFANCSISTTTAPVEWKSPNRQIPKNITCANYSGTVGGNVTFQGLKNKTEDFLSWLLGSGYKSICSFFPQLPGDSNEQHYRYEVTNLTYNCTYDRLTLLNLTTENSRNYYFRREDANSTFYYSCYNLTVS.

The first 21 residues, 1–21, serve as a signal peptide directing secretion; it reads MMLRAWRLMVLLAAYCYYVFA. N-linked (GlcNAc...) asparagine; by host glycosylation is found at N22, N44, N49, N57, N65, N104, N108, N118, N135, and N144.

This sequence belongs to the RL11 family. N-glycosylated and possibly O-glycosylated.

It localises to the virion membrane. The protein is Early glycoprotein GP48 (UL4) of Homo sapiens (Human).